Consider the following 225-residue polypeptide: UPF0173 metal-dependent hydrolase Pcal_1074 (225 aa).

It belongs to the UPF0173 family.

This chain is UPF0173 metal-dependent hydrolase Pcal_1074, found in Pyrobaculum calidifontis (strain DSM 21063 / JCM 11548 / VA1).